Consider the following 409-residue polypeptide: MDSNFIFGIIAFTALVLVLAVIILFAKSKLVDSGDITISINNDPEKGITLPAGGKLLGALASKGIFVSSACGGGGSCGQCKVQVKSGGGEILPTELSHISKKEAKEGWRLACQVNVKSSMDVELPEEIFGVKKWECTVISNDNKATFIKELKLQIPEGEEVPFRAGGYIQIEADPHTVNYKDFDIPKEYHEDWDKFNLWRYVSKVDEHIIRAYSMASYPEEKGIIMLNVRIATPPPRNPDVPPGQMSSYIWSLKPGDKVTISGPFGEFFAKETDNEMVFIGGGAGMAPMRSHIFDQLKRLKSKRKMSFWYGARSKREIFYQEDFDQLAAENDNFVWHVALSDALPEDNWTGYTGFIHNVLYENYLKNHEAPEDCEYYMCGPPVMNAAVIGMLKSLGVEDENILLDDFGG.

A helical transmembrane segment spans residues Phe-5–Phe-25. The 2Fe-2S ferredoxin-type domain maps to Gly-34–Ile-128. [2Fe-2S] cluster is bound by residues Cys-71, Cys-77, Cys-80, and Cys-112. The FAD-binding FR-type domain occupies Val-131–Lys-271.

This sequence belongs to the NqrF family. Composed of six subunits; NqrA, NqrB, NqrC, NqrD, NqrE and NqrF. Requires [2Fe-2S] cluster as cofactor. FAD is required as a cofactor.

The protein resides in the cell inner membrane. It catalyses the reaction a ubiquinone + n Na(+)(in) + NADH + H(+) = a ubiquinol + n Na(+)(out) + NAD(+). In terms of biological role, NQR complex catalyzes the reduction of ubiquinone-1 to ubiquinol by two successive reactions, coupled with the transport of Na(+) ions from the cytoplasm to the periplasm. The first step is catalyzed by NqrF, which accepts electrons from NADH and reduces ubiquinone-1 to ubisemiquinone by a one-electron transfer pathway. This chain is Na(+)-translocating NADH-quinone reductase subunit F, found in Actinobacillus pleuropneumoniae serotype 5b (strain L20).